A 752-amino-acid polypeptide reads, in one-letter code: F-box and WD repeat domain containing protein 10B (752 aa).

WD repeat units lie at residues 169-206 (GLNQ…TSLP), 451-490 (GHAG…CTRI), 493-532 (GHQG…KTFR), 534-569 (KDPI…LVKT), 572-609 (GHEG…ERCL), and 611-652 (AFKH…KVIK).

In terms of tissue distribution, expressed in pancreas, heart and skeletal muscle.

This is F-box and WD repeat domain containing protein 10B from Homo sapiens (Human).